We begin with the raw amino-acid sequence, 143 residues long: Photosystem I reaction center subunit IV A, chloroplastic (143 aa).

The N-terminal 44 residues, 1–44 (MAMTTASTVFVLPANVTSVAGASSSRSSVSFLPMRNAGSRLVVR), are a transit peptide targeting the chloroplast. The tract at residues 43-85 (VRAAEDPAPASSSSKDSPAAAAAPDGATATKPKPPPIGPKRGS) is disordered. Positions 48–73 (DPAPASSSSKDSPAAAAAPDGATATK) are enriched in low complexity.

This sequence belongs to the PsaE family. Post-translationally, 2 isoforms may exist. With or without the N-terminal alanine.

The protein localises to the plastid. The protein resides in the chloroplast thylakoid membrane. Its function is as follows. Stabilizes the interaction between PsaC and the PSI core, assists the docking of the ferredoxin to PSI and interacts with ferredoxin-NADP oxidoreductase. The sequence is that of Photosystem I reaction center subunit IV A, chloroplastic (PSAE1) from Arabidopsis thaliana (Mouse-ear cress).